A 644-amino-acid chain; its full sequence is Adhesion G-protein coupled receptor F2 (644 aa).

The first 18 residues, 1 to 18 (MIPAHWLYCLMLLLPIES), serve as a signal peptide directing secretion. Topologically, residues 19–386 (CRILCQASSK…ESPVLTYITY (368 aa)) are extracellular. 4 N-linked (GlcNAc...) asparagine glycosylation sites follow: asparagine 155, asparagine 219, asparagine 293, and asparagine 311. The GAIN-B domain occupies 233–377 (SRGSLGKNFT…SILMSPNTLE (145 aa)). 2 cysteine pairs are disulfide-bonded: cysteine 329-cysteine 356 and cysteine 344-cysteine 358. The interval 329–377 (CVGWHSLESRWDWRACKTIQENSRQAVCRCRPNKLYTSFSILMSPNTLE) is GPS. A helical transmembrane segment spans residues 387-407 (IGLGISICSLIICLAIEVLVW). Topologically, residues 408–422 (SQVTKTEISYLRHLC) are cytoplasmic. Residues 423 to 443 (IANIAATLLMADAWFIVASFL) form a helical membrane-spanning segment. Residues 444-465 (SGPVLHHNGCVAATFFVHFFYL) lie on the Extracellular side of the membrane. A helical membrane pass occupies residues 466–486 (SVFFWMLAKALLILYGILIVF). The Cytoplasmic portion of the chain corresponds to 487-493 (HTLPKSC). The chain crosses the membrane as a helical span at residues 494–514 (LVASLFSVGYGCPLVIAIITL). Over 515–541 (AVTEPGKGYLRPEACWLNWDMTKALLA) the chain is Extracellular. Residues 542 to 562 (FVVPALAIVVVNLITVTMVII) form a helical membrane-spanning segment. Topologically, residues 563 to 585 (KTQRAAIGSSMFQEVRAIVRICK) are cytoplasmic. The helical transmembrane segment at 586 to 606 (NIAILTPLLGLTWGFGIATVI) threads the bilayer. Residues 607–610 (NGHS) lie on the Extracellular side of the membrane. The chain crosses the membrane as a helical span at residues 611–631 (LAFHIIFSLLNALQVSPDAAV).

This sequence belongs to the G-protein coupled receptor 2 family. Adhesion G-protein coupled receptor (ADGR) subfamily. In terms of tissue distribution, mainly expressed in skin and heart, and very weakly in lung and spleen. Detected in all epidermal layers of skin.

Its subcellular location is the membrane. Functionally, orphan receptor. The polypeptide is Adhesion G-protein coupled receptor F2 (Adgrf2) (Mus musculus (Mouse)).